Reading from the N-terminus, the 485-residue chain is Sulfate adenylyltransferase subunit 1 (485 aa).

Positions 17 to 232 (KDLLRLLTAG…LETVHIDNDH (216 aa)) constitute a tr-type G domain. Residues 26–33 (GSVDDGKS) are G1. 26-33 (GSVDDGKS) contributes to the GTP binding site. A G2 region spans residues 84 to 88 (GITID). The segment at 105–108 (DTPG) is G3. Residues 105 to 109 (DTPGH) and 160 to 163 (NKMD) contribute to the GTP site. The G4 stretch occupies residues 160-163 (NKMD). The G5 stretch occupies residues 197–199 (SAL).

It belongs to the TRAFAC class translation factor GTPase superfamily. Classic translation factor GTPase family. CysN/NodQ subfamily. Heterodimer composed of CysD, the smaller subunit, and CysN.

It carries out the reaction sulfate + ATP + H(+) = adenosine 5'-phosphosulfate + diphosphate. It participates in sulfur metabolism; hydrogen sulfide biosynthesis; sulfite from sulfate: step 1/3. Functionally, with CysD forms the ATP sulfurylase (ATPS) that catalyzes the adenylation of sulfate producing adenosine 5'-phosphosulfate (APS) and diphosphate, the first enzymatic step in sulfur assimilation pathway. APS synthesis involves the formation of a high-energy phosphoric-sulfuric acid anhydride bond driven by GTP hydrolysis by CysN coupled to ATP hydrolysis by CysD. The chain is Sulfate adenylyltransferase subunit 1 from Bacteroides thetaiotaomicron (strain ATCC 29148 / DSM 2079 / JCM 5827 / CCUG 10774 / NCTC 10582 / VPI-5482 / E50).